Consider the following 134-residue polypeptide: Cilia- and flagella-associated protein 144 (134 aa).

Residues Q76–D95 form a disordered region.

It belongs to the CFAP144 family. Microtubule inner protein component of sperm flagellar doublet microtubules.

Its subcellular location is the cytoplasm. The protein localises to the cytoskeleton. It localises to the cilium axoneme. The protein resides in the flagellum axoneme. In terms of biological role, microtubule inner protein (MIP) part of the dynein-decorated doublet microtubules (DMTs) in cilia axoneme, which is required for motile cilia beating. The sequence is that of Cilia- and flagella-associated protein 144 from Homo sapiens (Human).